Consider the following 85-residue polypeptide: Omega-conotoxin-like Am6.5 (85 aa).

The N-terminal stretch at 1 to 19 (MCILIVAVLFLTAWTFVMA) is a signal peptide. The propeptide occupies 20 to 53 (DDPRDEPDTVVRGGKLFSRARDEMNPAASKLNER). 3 cysteine pairs are disulfide-bonded: Cys55–Cys73, Cys62–Cys77, and Cys72–Cys81. A Glutamine amide modification is found at Gln84.

The protein belongs to the conotoxin O1 family. Post-translationally, is not hydroxylated. Expressed by the venom duct.

It is found in the secreted. In terms of biological role, omega-conotoxins act at presynaptic membranes, they bind and block voltage-gated calcium channels (Cav). The sequence is that of Omega-conotoxin-like Am6.5 from Conus amadis (Amadis cone).